Here is a 137-residue protein sequence, read N- to C-terminus: Probable calcium-binding protein CML33 (137 aa).

EF-hand domains follow at residues 1-36, 37-72, 76-111, and 112-137; these read MNNM…LSPS, IPSE…TAQS, DVEK…LGEK, and CTVE…FVGV. Ca(2+) is bound by residues aspartate 14, serine 16, aspartate 18, lysine 20, and glutamate 25. The Ca(2+) site is built by aspartate 89, asparagine 91, aspartate 93, lysine 95, and glutamate 100.

Potential calcium sensor. The protein is Probable calcium-binding protein CML33 (CML33) of Arabidopsis thaliana (Mouse-ear cress).